Consider the following 461-residue polypeptide: Cysteine--tRNA ligase (461 aa).

Cys28 is a Zn(2+) binding site. The 'HIGH' region signature appears at 30–40 (VTIYDLCHIGH). Zn(2+)-binding residues include Cys209, His234, and Glu238. A 'KMSKS' region motif is present at residues 266-270 (KMSKS). Lys269 contacts ATP.

This sequence belongs to the class-I aminoacyl-tRNA synthetase family. Monomer. It depends on Zn(2+) as a cofactor.

It localises to the cytoplasm. It catalyses the reaction tRNA(Cys) + L-cysteine + ATP = L-cysteinyl-tRNA(Cys) + AMP + diphosphate. This is Cysteine--tRNA ligase from Vibrio atlanticus (strain LGP32) (Vibrio splendidus (strain Mel32)).